The chain runs to 527 residues: Eukaryotic translation initiation factor 2 subunit gamma (527 aa).

The segment at 1-83 is disordered; it reads MSDLQDQEPS…GLPEQPLNPD (83 aa). T60 bears the Phosphothreonine mark. In terms of domain architecture, tr-type G spans 98 to 307; that stretch reads QATINIGTIG…IVKTIPVPPR (210 aa). The G1 stretch occupies residues 107–114; the sequence is GHVAHGKS. GTP is bound at residue 110–115; sequence AHGKST. The G2 stretch occupies residues 135–139; sequence NITIK. The segment at 193–196 is G3; it reads DCPG. A GTP-binding site is contributed by 249–252; that stretch reads NKVD. The tract at residues 249-252 is G4; it reads NKVD. S258 is subject to Phosphoserine. Residue 284–286 coordinates GTP; the sequence is SAQ. The segment at 284-286 is G5; sequence SAQ. Residues 515 to 527 are interacts with CDC123; that stretch reads ATIKKGTTLEPIA.

It belongs to the TRAFAC class translation factor GTPase superfamily. Classic translation factor GTPase family. EIF2G subfamily. As to quaternary structure, eukaryotic translation initiation factor 2 eIF2 is a heterotrimeric complex composed of an alpha, a beta and a gamma subunit. The factors eIF-1, eIF-1A, eIF-2, eIF-3, TIF5/eIF-5 and methionyl-tRNAi form a multifactor complex (MFC) that may bind to the 40S ribosome. Interacts (via C-terminus) with CDC123; the interaction is direct. Interacts with GCD1. Interacts with the eIF2B complex subunits GCD6 and GCD7. Interacts with methionyl-initiator methionine tRNA.

It is found in the cytoplasm. The protein localises to the cytosol. It catalyses the reaction GTP + H2O = GDP + phosphate + H(+). As a subunit of eukaryotic initiation factor 2 eIF2, involved in the early steps of protein synthesis. In the presence of GTP, eIF-2 forms a ternary complex with initiator tRNA Met-tRNAi and then recruits the 40S ribosomal complex and initiation factors eIF-1, eIF-1A and eIF-3 to form the 43S pre-initiation complex (43S PIC), a step that determines the rate of protein translation. The 43S PIC binds to mRNA and scans downstream to the initiation codon, where it forms a 48S initiation complex by codon-anticodon base pairing. This leads to the displacement of eIF-1 to allow GTPase-activating protein (GAP) eIF-5-mediated hydrolysis of eIF2-bound GTP. Hydrolysis of GTP and release of Pi, which makes GTP hydrolysis irreversible, causes the release of the eIF-2-GDP binary complex from the 40S subunit, an event that is essential for the subsequent joining of the 60S ribosomal subunit to form an elongation-competent 80S ribosome. In order for eIF-2 to recycle and catalyze another round of initiation, the GDP bound to eIF-2 must be exchanged with GTP by way of a reaction catalyzed by GDP-GTP exchange factor (GEF) eIF-2B. This chain is Eukaryotic translation initiation factor 2 subunit gamma (GCD11), found in Saccharomyces cerevisiae (strain ATCC 204508 / S288c) (Baker's yeast).